We begin with the raw amino-acid sequence, 162 residues long: Phosphopantetheine adenylyltransferase (162 aa).

Substrate is bound at residue Ser9. Residues 9–10 (SF) and His17 each bind ATP. Residues Lys41, Leu73, and Lys87 each contribute to the substrate site. ATP is bound by residues 88–90 (GLR), Glu98, and 123–129 (CSFLSSS).

The protein belongs to the bacterial CoaD family. As to quaternary structure, homohexamer. Mg(2+) is required as a cofactor.

Its subcellular location is the cytoplasm. The catalysed reaction is (R)-4'-phosphopantetheine + ATP + H(+) = 3'-dephospho-CoA + diphosphate. The protein operates within cofactor biosynthesis; coenzyme A biosynthesis; CoA from (R)-pantothenate: step 4/5. Functionally, reversibly transfers an adenylyl group from ATP to 4'-phosphopantetheine, yielding dephospho-CoA (dPCoA) and pyrophosphate. This chain is Phosphopantetheine adenylyltransferase, found in Natranaerobius thermophilus (strain ATCC BAA-1301 / DSM 18059 / JW/NM-WN-LF).